A 180-amino-acid chain; its full sequence is Crossover junction endodeoxyribonuclease RuvC (180 aa).

Catalysis depends on residues Asp7, Glu66, and Asp138. Residues Asp7, Glu66, and Asp138 each coordinate Mg(2+).

Belongs to the RuvC family. In terms of assembly, homodimer which binds Holliday junction (HJ) DNA. The HJ becomes 2-fold symmetrical on binding to RuvC with unstacked arms; it has a different conformation from HJ DNA in complex with RuvA. In the full resolvosome a probable DNA-RuvA(4)-RuvB(12)-RuvC(2) complex forms which resolves the HJ. Mg(2+) serves as cofactor.

The protein resides in the cytoplasm. The enzyme catalyses Endonucleolytic cleavage at a junction such as a reciprocal single-stranded crossover between two homologous DNA duplexes (Holliday junction).. The RuvA-RuvB-RuvC complex processes Holliday junction (HJ) DNA during genetic recombination and DNA repair. Endonuclease that resolves HJ intermediates. Cleaves cruciform DNA by making single-stranded nicks across the HJ at symmetrical positions within the homologous arms, yielding a 5'-phosphate and a 3'-hydroxyl group; requires a central core of homology in the junction. The consensus cleavage sequence is 5'-(A/T)TT(C/G)-3'. Cleavage occurs on the 3'-side of the TT dinucleotide at the point of strand exchange. HJ branch migration catalyzed by RuvA-RuvB allows RuvC to scan DNA until it finds its consensus sequence, where it cleaves and resolves the cruciform DNA. This Burkholderia thailandensis (strain ATCC 700388 / DSM 13276 / CCUG 48851 / CIP 106301 / E264) protein is Crossover junction endodeoxyribonuclease RuvC.